The sequence spans 166 residues: MTPVEEIIKKDIFRETPLRYLGYANEVGEAFRSLVKPVVVKFSYVVAFGYVAADSIDKGLQEYIKTHSTSTEKTKKVAIAAVDTVLWQTFASVLIPGFTINRFCFFSNLLLQKSTKLPTNMRKWTVTCLGLATIPFIVHPIDSFVEEAMDKTARKIYNEPTISNKE.

A run of 3 helical transmembrane segments spans residues 33–53 (SLVK…YVAA), 78–98 (AIAA…IPGF), and 125–145 (TVTC…DSFV).

Belongs to the MTFP1 family.

The protein resides in the mitochondrion inner membrane. In terms of biological role, involved in the mitochondrial division probably by regulating membrane fission. Loss-of-function leads to apoptosis. The chain is Mitochondrial fission process protein 1 (mtp-18) from Caenorhabditis elegans.